A 185-amino-acid polypeptide reads, in one-letter code: MIDEINVDARQRMEKSVLALRGQFTKIRTGRAHPSLLDSIMVPYYGAPTPLKQLANVIAEDSRTLALTVFDKSAAQAVEKAIMQSDLGLNPMSAGTVIRIPMPALTEERRKDLIRVVRNEAEGGRVAVRNIRRDANGDIKELLKEKEISEDDAHRGEDAIQKLTDEFVKQIDDILAAKETELMEV.

It belongs to the RRF family.

Its subcellular location is the cytoplasm. Its function is as follows. Responsible for the release of ribosomes from messenger RNA at the termination of protein biosynthesis. May increase the efficiency of translation by recycling ribosomes from one round of translation to another. This chain is Ribosome-recycling factor, found in Pseudoalteromonas atlantica (strain T6c / ATCC BAA-1087).